Reading from the N-terminus, the 602-residue chain is Arginine--tRNA ligase (602 aa).

Positions 132 to 142 (ANPTGPLHVGH) match the 'HIGH' region motif.

This sequence belongs to the class-I aminoacyl-tRNA synthetase family. As to quaternary structure, monomer.

The protein resides in the cytoplasm. It catalyses the reaction tRNA(Arg) + L-arginine + ATP = L-arginyl-tRNA(Arg) + AMP + diphosphate. The chain is Arginine--tRNA ligase from Cupriavidus metallidurans (strain ATCC 43123 / DSM 2839 / NBRC 102507 / CH34) (Ralstonia metallidurans).